Consider the following 294-residue polypeptide: MATYGQPCARPMCIPPSYADLGKAARDIFNKGFGFGLVKLDVKTKSCSGVEFSTSGSSNTDTGKVTGTLETKYKWCEYGLTFTEKWNTDNTLGTEIAIEDQICQGLKLTFDTTFSPNTGKKSGKIKSSYKRECINLGCDVDFDFAGPAIHGSAVFGYEGWLAGYQMTFDSAKSKLTRNNFAVGYRTGDFQLHTNVNDGTEFGGSIYQKVCEDLDTSVNLAWTSGTNCTRFGIAAKYQLDPTASISAKVNNSSLIGVGYTQTLRPGVKLTLSALVDGKSINAGGHKLGLALELEA.

Alanine 2 bears the N-acetylalanine mark. Residues lysine 23 and lysine 31 each coordinate ATP. Lysine 31 is subject to N6-acetyllysine; alternate. N6-succinyllysine; alternate is present on lysine 31. Lysine 31 participates in a covalent cross-link: Glycyl lysine isopeptide (Lys-Gly) (interchain with G-Cter in ubiquitin); alternate. 2 beta stranded membrane-spanning segments follow: residues 37–46 (LVKLDVKTKS) and 50–58 (VEFSTSGSS). Lysine 64 is covalently cross-linked (Glycyl lysine isopeptide (Lys-Gly) (interchain with G-Cter in ubiquitin)). The chain crosses the membrane as a beta stranded span at residues 65–75 (VTGTLETKYKW). Tyrosine 78 bears the Phosphotyrosine mark. 3 beta stranded membrane-spanning segments follow: residues 80–87 (LTFTEKWN), 91–100 (TLGTEIAIED), and 106–115 (LKLTFDTTFS). At threonine 118 the chain carries Phosphothreonine. Residue lysine 120 is modified to N6-acetyllysine; alternate. Residue lysine 120 forms a Glycyl lysine isopeptide (Lys-Gly) (interchain with G-Cter in ubiquitin); alternate linkage. Residue lysine 121 forms a Glycyl lysine isopeptide (Lys-Gly) (interchain with G-Cter in ubiquitin) linkage. Beta stranded transmembrane passes span 122–131 (SGKIKSSYKR), 134–141 (INLGCDVD), 148–156 (AIHGSAVFG), and 161–169 (LAGYQMTFD). Lysine 172 participates in a covalent cross-link: Glycyl lysine isopeptide (Lys-Gly) (interchain with G-Cter in ubiquitin). Transmembrane regions (beta stranded) follow at residues 174-186 (KLTR…GYRT), 189-196 (FQLHTNVN), 200-209 (EFGGSIYQKV), 213-222 (LDTSVNLAWT), 229-238 (RFGIAAKYQL), and 242-249 (ASISAKVN). Serine 251 is subject to Phosphoserine. NAD(+) contacts are provided by residues 253-255 (LIG) and 271-275 (SALVD). Beta stranded transmembrane passes span 253-262 (LIGVGYTQTL) and 265-274 (GVKLTLSALV). The residue at position 277 (lysine 277) is an N6-acetyllysine; alternate. Lysine 277 participates in a covalent cross-link: Glycyl lysine isopeptide (Lys-Gly) (interchain with G-Cter in ubiquitin); alternate. Residues 284-293 (HKLGLALELE) form a beta stranded membrane-spanning segment.

This sequence belongs to the eukaryotic mitochondrial porin family. Monomer, homodimer and higher order oligomers; formation of higher order structures is necessary for scramblase activity. Interacts with ARMC12 in a TBC1D21-dependent manner. Interacts with KLC3. Interacts with SPATA33. Interacts with PPP3CC in a SPATA33-dependent manner. Post-translationally, ubiquitinated by PRKN during mitophagy, leading to its degradation and enhancement of mitophagy. Deubiquitinated by USP30.

The protein resides in the mitochondrion outer membrane. The protein localises to the membrane. It carries out the reaction chloride(in) = chloride(out). The catalysed reaction is K(+)(in) = K(+)(out). The enzyme catalyses a 1,2-diacyl-sn-glycero-3-phospho-L-serine(in) = a 1,2-diacyl-sn-glycero-3-phospho-L-serine(out). It catalyses the reaction a 1,2-diacyl-sn-glycero-3-phosphocholine(in) = a 1,2-diacyl-sn-glycero-3-phosphocholine(out). It carries out the reaction a 1,2-diacyl-sn-glycero-3-phospho-(1D-myo-inositol)(in) = a 1,2-diacyl-sn-glycero-3-phospho-(1D-myo-inositol)(out). Functionally, non-selective voltage-gated ion channel that mediates the transport of anions and cations through the mitochondrion outer membrane and plasma membrane. The channel adopts an open conformation at zero mV and a closed conformation at both positive and negative potentials. There are two populations of channels; the main that functions in a lower open-state conductance with lower ion selectivity, that switch, in a voltage-dependent manner, from the open to a low-conducting 'closed' state and the other that has a normal ion selectivity in the typical high conductance, 'open' state. Binds various lipids, including the sphingolipid ceramide, the phospholipid phosphatidylcholine, and the sterols cholesterol and oxysterol. Binding of ceramide promotes the mitochondrial outer membrane permeabilization (MOMP) apoptotic pathway. Its function is as follows. Catalyzes the scrambling of phospholipids across the outer mitochondrial membrane; the mechanism is unrelated to channel activity and is capable of translocating both anionic and zwitterionic phospholipids. The chain is Non-selective voltage-gated ion channel VDAC2 from Oryctolagus cuniculus (Rabbit).